A 553-amino-acid polypeptide reads, in one-letter code: Solute carrier family 22 member 12 (553 aa).

A helical transmembrane segment spans residues Val10 to Trp30. N-linked (GlcNAc...) asparagine glycosylation is present at Asn56. 11 consecutive transmembrane segments (helical) span residues Pro146–Ala166, Leu182–Phe202, Phe204–Trp224, Leu232–Ala252, Met260–Pro280, Ile351–Leu371, Ile378–Leu398, Phe412–Val432, Ser435–Phe455, Met466–Val486, and Trp495–Leu515. A Phosphoserine modification is found at Ser534. A Phosphothreonine modification is found at Thr542.

Belongs to the major facilitator (TC 2.A.1) superfamily. Organic cation transporter (TC 2.A.1.19) family. As to quaternary structure, interacts with PDZK1. In terms of processing, N-glycosylated. Detected in kidney (at protein level). Detected in kidney cortex, in proximal tubules.

It localises to the apical cell membrane. The enzyme catalyses urate(out) + (S)-lactate(in) = urate(in) + (S)-lactate(out). It catalyses the reaction nicotinate(in) + urate(out) = nicotinate(out) + urate(in). The catalysed reaction is urate(out) + n chloride(in) = urate(in) + n chloride(out). It carries out the reaction orotate(out) + nicotinate(in) = orotate(in) + nicotinate(out). Electroneutral antiporter that translocates urate across the apical membrane of proximal tubular cells in exchange for monovalent organic or inorganic anions. Involved in renal reabsorption of urate and helps maintaining blood levels of uric acid. Mediates urate uptake by an exchange with organic anions such as (S)-lactate and nicotinate, and inorganic anion Cl(-). Other inorganic anions such as Br(-), I(-) and NO3(-) may also act as counteranions that exchange for urate. Also mediates orotate tubular uptake coupled with nicotinate efflux and to a lesser extent with lactate efflux, therefore displaying a potential role in orotate renal reabsorption. Orotate transport is Cl(-)-dependent. The sequence is that of Solute carrier family 22 member 12 from Mus musculus (Mouse).